The primary structure comprises 401 residues: Exodeoxyribonuclease 7 large subunit (401 aa).

This sequence belongs to the XseA family. Heterooligomer composed of large and small subunits.

Its subcellular location is the cytoplasm. It carries out the reaction Exonucleolytic cleavage in either 5'- to 3'- or 3'- to 5'-direction to yield nucleoside 5'-phosphates.. Its function is as follows. Bidirectionally degrades single-stranded DNA into large acid-insoluble oligonucleotides, which are then degraded further into small acid-soluble oligonucleotides. The protein is Exodeoxyribonuclease 7 large subunit of Clostridium botulinum (strain Langeland / NCTC 10281 / Type F).